We begin with the raw amino-acid sequence, 183 residues long: UPF0098 protein YbcL (183 aa).

The N-terminal stretch at 1 to 21 (MKTLIVSTVLAFITFSAQAAA) is a signal peptide. An intrachain disulfide couples Cys-46 to Cys-129.

Belongs to the UPF0098 family. Homodimer.

It is found in the periplasm. In Escherichia coli (strain K12), this protein is UPF0098 protein YbcL (ybcL).